A 443-amino-acid polypeptide reads, in one-letter code: Toxin YjjJ (443 aa).

Asp342 acts as the Proton acceptor in catalysis.

Belongs to the HipA Ser/Thr kinase family.

Its function is as follows. Toxic when overexpressed in E.coli, leading to long filamentous cells. The toxic effect is neutralized by non-cognate antitoxin HipB. Does not seem to inhibit DNA, RNA or protein synthesis, and unlike paralogous toxin HipA its toxic activity is not counteracted by overexpression of GltX. Binds DNA. Might be a protein kinase. The protein is Toxin YjjJ (yjjJ) of Escherichia coli (strain K12).